A 609-amino-acid polypeptide reads, in one-letter code: DNA polymerase alpha subunit B (609 aa).

A Phosphoserine modification is found at S155. T164 carries the phosphothreonine modification. Residues S166 and S168 each carry the phosphoserine modification.

Belongs to the DNA polymerase alpha subunit B family. In terms of assembly, component of the alpha DNA polymerase complex (also known as the alpha DNA polymerase-primase complex) consisting of four subunits: the catalytic subunit PolA1, the regulatory subunit PolA2, and the primase complex subunits Prim1 and Prim2 respectively. PolA1 associates with the DNA primase complex before association with PolA2. Post-translationally, phosphorylated in embryos until cycle 13. As to expression, expressed in embryos (at protein level).

It is found in the nucleus. Functionally, accessory subunit of the DNA polymerase alpha complex (also known as the alpha DNA polymerase-primase complex) which plays an essential role in the initiation of DNA synthesis. During the S phase of the cell cycle, the DNA polymerase alpha complex (composed of a catalytic subunit PolA1, an accessory subunit PolA2 and two primase subunits, the catalytic subunit Prim1 and the regulatory subunit Prim2) is recruited to DNA at the replicative forks. The primase subunit of the polymerase alpha complex initiates DNA synthesis by oligomerising short RNA primers on both leading and lagging strands. These primers are initially extended by the polymerase alpha catalytic subunit and subsequently transferred to polymerase delta and polymerase epsilon for processive synthesis on the lagging and leading strand, respectively. The polypeptide is DNA polymerase alpha subunit B (Drosophila melanogaster (Fruit fly)).